The primary structure comprises 143 residues: Peptide methionine sulfoxide reductase MsrB (143 aa).

Residues 5–127 (NEELKKKLTP…NSAALRFIPK (123 aa)) form the MsrB domain. C116 functions as the Nucleophile in the catalytic mechanism.

This sequence belongs to the MsrB Met sulfoxide reductase family.

The catalysed reaction is L-methionyl-[protein] + [thioredoxin]-disulfide + H2O = L-methionyl-(R)-S-oxide-[protein] + [thioredoxin]-dithiol. In Halalkalibacterium halodurans (strain ATCC BAA-125 / DSM 18197 / FERM 7344 / JCM 9153 / C-125) (Bacillus halodurans), this protein is Peptide methionine sulfoxide reductase MsrB.